The chain runs to 372 residues: Putative 8-amino-7-oxononanoate synthase (372 aa).

Residue Arg-20 participates in substrate binding. Position 94 to 95 (94 to 95) interacts with pyridoxal 5'-phosphate; that stretch reads GY. A substrate-binding site is contributed by His-119. Residues Ser-167, 192–195, and 223–226 contribute to the pyridoxal 5'-phosphate site; these read DDAH and TLSK. Lys-226 carries the post-translational modification N6-(pyridoxal phosphate)lysine. Residue Thr-337 participates in substrate binding.

This sequence belongs to the class-II pyridoxal-phosphate-dependent aminotransferase family. BioF subfamily. In terms of assembly, homodimer. Requires pyridoxal 5'-phosphate as cofactor.

It carries out the reaction 6-carboxyhexanoyl-[ACP] + L-alanine + H(+) = (8S)-8-amino-7-oxononanoate + holo-[ACP] + CO2. Its pathway is cofactor biosynthesis; biotin biosynthesis. Catalyzes the decarboxylative condensation of pimeloyl-[acyl-carrier protein] and L-alanine to produce 8-amino-7-oxononanoate (AON), [acyl-carrier protein], and carbon dioxide. In Methanocaldococcus jannaschii (strain ATCC 43067 / DSM 2661 / JAL-1 / JCM 10045 / NBRC 100440) (Methanococcus jannaschii), this protein is Putative 8-amino-7-oxononanoate synthase (bioF).